The primary structure comprises 264 residues: Thymidylate synthase (264 aa).

Arg21 contacts dUMP. Position 51 (His51) interacts with (6R)-5,10-methylene-5,6,7,8-tetrahydrofolate. 126–127 (RR) serves as a coordination point for dUMP. Cys146 functions as the Nucleophile in the catalytic mechanism. Residues 166–169 (RSCD), Asn177, and 207–209 (HLY) each bind dUMP. (6R)-5,10-methylene-5,6,7,8-tetrahydrofolate is bound at residue Asp169. Ala263 contributes to the (6R)-5,10-methylene-5,6,7,8-tetrahydrofolate binding site.

The protein belongs to the thymidylate synthase family. Bacterial-type ThyA subfamily. Homodimer.

The protein localises to the cytoplasm. The catalysed reaction is dUMP + (6R)-5,10-methylene-5,6,7,8-tetrahydrofolate = 7,8-dihydrofolate + dTMP. It functions in the pathway pyrimidine metabolism; dTTP biosynthesis. In terms of biological role, catalyzes the reductive methylation of 2'-deoxyuridine-5'-monophosphate (dUMP) to 2'-deoxythymidine-5'-monophosphate (dTMP) while utilizing 5,10-methylenetetrahydrofolate (mTHF) as the methyl donor and reductant in the reaction, yielding dihydrofolate (DHF) as a by-product. This enzymatic reaction provides an intracellular de novo source of dTMP, an essential precursor for DNA biosynthesis. This Serratia proteamaculans (strain 568) protein is Thymidylate synthase.